Consider the following 372-residue polypeptide: Aminomethyltransferase (372 aa).

This sequence belongs to the GcvT family. The glycine cleavage system is composed of four proteins: P, T, L and H.

The catalysed reaction is N(6)-[(R)-S(8)-aminomethyldihydrolipoyl]-L-lysyl-[protein] + (6S)-5,6,7,8-tetrahydrofolate = N(6)-[(R)-dihydrolipoyl]-L-lysyl-[protein] + (6R)-5,10-methylene-5,6,7,8-tetrahydrofolate + NH4(+). In terms of biological role, the glycine cleavage system catalyzes the degradation of glycine. The sequence is that of Aminomethyltransferase from Burkholderia cenocepacia (strain ATCC BAA-245 / DSM 16553 / LMG 16656 / NCTC 13227 / J2315 / CF5610) (Burkholderia cepacia (strain J2315)).